The following is a 147-amino-acid chain: UPF0178 protein IL2341 (147 aa).

The protein belongs to the UPF0178 family.

This Idiomarina loihiensis (strain ATCC BAA-735 / DSM 15497 / L2-TR) protein is UPF0178 protein IL2341.